The sequence spans 316 residues: MKVLWAALVVTLLAGCGADVEPGPEVQPGPEVQLGKEWATWQASQPWEQALGRFWNYLRWVQTLSEKVQEQLLSSQVTEELTALMDDTMKEVKACKSELEEQLGPVTEETKARVSKELQAAQARLGADMEEVRSRLAQYRGELQAMVGQSTEELRGRLSAHLRKLRKRLLRDAEDLQRRLAVYQAGIREGAARSVNTLREHLGPLAEQAATVHTLVSKPLQERAEAWAQRLRGRLEKAGFPVGDRLDEVREQVQEVRAKVEEQANQVRLQAEAFQGRLKSWFEPLVQDMQQKWAELVEKVQLAVGAVPTSVPSEKQ.

The signal sequence occupies residues M1–A18. A run of 8 repeats spans residues A83–G104, P105–G126, A127–G148, Q149–L170, R171–A192, R193–T214, L215–R232, and G233–Q254. The tract at residues A83 to Q254 is 8 X 22 AA approximate tandem repeats. Positions H161–R171 are LDL and other lipoprotein receptors binding. Residue L165 to R168 participates in heparin binding. The lipid-binding and lipoprotein association stretch occupies residues H213–M289. A228–L235 lines the heparin pocket. Residues N265 to Q316 form a homooligomerization region. The interval R277 to M289 is specificity for association with VLDL.

Belongs to the apolipoprotein A1/A4/E family. In terms of assembly, homotetramer. May interact with ABCA1; functionally associated with ABCA1 in the biogenesis of HDLs. May interact with APP/A4 amyloid-beta peptide; the interaction is extremely stable in vitro but its physiological significance is unclear. May interact with MAPT. May interact with MAP2. In the cerebrospinal fluid, interacts with secreted SORL1. Interacts with PMEL; this allows the loading of PMEL luminal fragment on ILVs to induce fibril nucleation. APOE exists as multiple glycosylated and sialylated glycoforms within cells and in plasma. The extent of glycosylation and sialylation are tissue and context specific. Post-translationally, glycated in plasma VLDL. In terms of processing, phosphorylated by FAM20C in the extracellular medium.

The protein localises to the secreted. The protein resides in the extracellular space. Its subcellular location is the extracellular matrix. It localises to the extracellular vesicle. It is found in the endosome. The protein localises to the multivesicular body. Functionally, APOE is an apolipoprotein, a protein associating with lipid particles, that mainly functions in lipoprotein-mediated lipid transport between organs via the plasma and interstitial fluids. APOE is a core component of plasma lipoproteins and is involved in their production, conversion and clearance. Apolipoproteins are amphipathic molecules that interact both with lipids of the lipoprotein particle core and the aqueous environment of the plasma. As such, APOE associates with chylomicrons, chylomicron remnants, very low density lipoproteins (VLDL) and intermediate density lipoproteins (IDL) but shows a preferential binding to high-density lipoproteins (HDL). It also binds a wide range of cellular receptors including the LDL receptor/LDLR and the very low-density lipoprotein receptor/VLDLR that mediate the cellular uptake of the APOE-containing lipoprotein particles. Finally, APOE also has a heparin-binding activity and binds heparan-sulfate proteoglycans on the surface of cells, a property that supports the capture and the receptor-mediated uptake of APOE-containing lipoproteins by cells. The protein is Apolipoprotein E (APOE) of Diceros bicornis (Black rhinoceros).